A 281-amino-acid polypeptide reads, in one-letter code: Bifunctional protein FolD (281 aa).

NADP(+)-binding positions include 165 to 167 (GRG), Thr-192, and Val-233.

It belongs to the tetrahydrofolate dehydrogenase/cyclohydrolase family. As to quaternary structure, homodimer.

It carries out the reaction (6R)-5,10-methylene-5,6,7,8-tetrahydrofolate + NADP(+) = (6R)-5,10-methenyltetrahydrofolate + NADPH. The catalysed reaction is (6R)-5,10-methenyltetrahydrofolate + H2O = (6R)-10-formyltetrahydrofolate + H(+). The protein operates within one-carbon metabolism; tetrahydrofolate interconversion. In terms of biological role, catalyzes the oxidation of 5,10-methylenetetrahydrofolate to 5,10-methenyltetrahydrofolate and then the hydrolysis of 5,10-methenyltetrahydrofolate to 10-formyltetrahydrofolate. The protein is Bifunctional protein FolD of Mycolicibacterium paratuberculosis (strain ATCC BAA-968 / K-10) (Mycobacterium paratuberculosis).